A 206-amino-acid chain; its full sequence is Large ribosomal subunit protein uL4 (206 aa).

This sequence belongs to the universal ribosomal protein uL4 family. Part of the 50S ribosomal subunit.

In terms of biological role, one of the primary rRNA binding proteins, this protein initially binds near the 5'-end of the 23S rRNA. It is important during the early stages of 50S assembly. It makes multiple contacts with different domains of the 23S rRNA in the assembled 50S subunit and ribosome. Forms part of the polypeptide exit tunnel. This is Large ribosomal subunit protein uL4 from Nitratidesulfovibrio vulgaris (strain ATCC 29579 / DSM 644 / CCUG 34227 / NCIMB 8303 / VKM B-1760 / Hildenborough) (Desulfovibrio vulgaris).